Here is a 413-residue protein sequence, read N- to C-terminus: Dolichyl-diphosphooligosaccharide--protein glycosyltransferase 48 kDa subunit (413 aa).

The Lumenal portion of the chain corresponds to 1–383 (GPRSLVLLEN…QYERFIPSAY (383 aa)). Residues 384-404 (PYYAGAFSMMVGLFMFSIVFL) form a helical membrane-spanning segment. At 405–413 (HMKEKEKSD) the chain is on the cytoplasmic side.

It belongs to the DDOST 48 kDa subunit family. In terms of assembly, component of the oligosaccharyltransferase (OST) complex.

The protein resides in the endoplasmic reticulum. It is found in the endoplasmic reticulum membrane. It functions in the pathway protein modification; protein glycosylation. Its function is as follows. Subunit of the oligosaccharyl transferase (OST) complex that catalyzes the initial transfer of a defined glycan (Glc(3)Man(9)GlcNAc(2) in eukaryotes) from the lipid carrier dolichol-pyrophosphate to an asparagine residue within an Asn-X-Ser/Thr consensus motif in nascent polypeptide chains, the first step in protein N-glycosylation. N-glycosylation occurs cotranslationally and the complex associates with the Sec61 complex at the channel-forming translocon complex that mediates protein translocation across the endoplasmic reticulum (ER). All subunits are required for a maximal enzyme activity. Required for the assembly of both SST3A- and SS3B-containing OST complexes. In Gallus gallus (Chicken), this protein is Dolichyl-diphosphooligosaccharide--protein glycosyltransferase 48 kDa subunit.